The chain runs to 104 residues: Salivary protein FS145 (104 aa).

Residues 1-18 form the signal peptide; sequence MKLFAVFLLFCLVNQIYC. Intrachain disulfides connect C32/C80, C62/C89, C72/C100, and C76/C102. The Putative integrin attachment site; atypical (WGD) signature appears at 92 to 94; it reads WGD.

Interacts with host integrin alpha-V/beta-3 (ITGAV:ITGB3).

The protein localises to the secreted. Its function is as follows. Inhibits proliferation, adhesion and migration of host cells as well as host angiogenesis by blocking host integrin alpha-V/beta-3 (ITGAV:ITGB3). This chain is Salivary protein FS145, found in Xenopsylla cheopis (Oriental rat flea).